We begin with the raw amino-acid sequence, 420 residues long: UDP-N-acetylglucosamine 1-carboxyvinyltransferase (420 aa).

Lys-22–Asn-23 is a binding site for phosphoenolpyruvate. Arg-93 is a UDP-N-acetyl-alpha-D-glucosamine binding site. Cys-117 (proton donor) is an active-site residue. 2-(S-cysteinyl)pyruvic acid O-phosphothioketal is present on Cys-117. Residues Asp-307 and Ile-329 each contribute to the UDP-N-acetyl-alpha-D-glucosamine site.

This sequence belongs to the EPSP synthase family. MurA subfamily.

Its subcellular location is the cytoplasm. The enzyme catalyses phosphoenolpyruvate + UDP-N-acetyl-alpha-D-glucosamine = UDP-N-acetyl-3-O-(1-carboxyvinyl)-alpha-D-glucosamine + phosphate. Its pathway is cell wall biogenesis; peptidoglycan biosynthesis. Functionally, cell wall formation. Adds enolpyruvyl to UDP-N-acetylglucosamine. This is UDP-N-acetylglucosamine 1-carboxyvinyltransferase from Saccharophagus degradans (strain 2-40 / ATCC 43961 / DSM 17024).